Consider the following 217-residue polypeptide: Probable lipoprotein CPn_0875/CP_0994/CPj0875/CpB0904 (217 aa).

Residues 1-21 form the signal peptide; that stretch reads MKRVIYKTIFCGLTLLTSLSS. The N-palmitoyl cysteine moiety is linked to residue Cys22. The S-diacylglycerol cysteine moiety is linked to residue Cys22.

This sequence belongs to the chlamydial CPn_0875/CT_734/TC_0107 family.

The protein resides in the cell membrane. This Chlamydia pneumoniae (Chlamydophila pneumoniae) protein is Probable lipoprotein CPn_0875/CP_0994/CPj0875/CpB0904.